The sequence spans 227 residues: Cytochrome c oxidase subunit 2 (227 aa).

Over M1–S14 the chain is Mitochondrial intermembrane. The helical transmembrane segment at P15–M45 threads the bilayer. Residues L46–Q59 are Mitochondrial matrix-facing. The helical transmembrane segment at E60–M87 threads the bilayer. Residues D88–I227 lie on the Mitochondrial intermembrane side of the membrane. Cu cation contacts are provided by H161, C196, E198, C200, H204, and M207. E198 lines the Mg(2+) pocket.

It belongs to the cytochrome c oxidase subunit 2 family. As to quaternary structure, component of the cytochrome c oxidase (complex IV, CIV), a multisubunit enzyme composed of 14 subunits. The complex is composed of a catalytic core of 3 subunits MT-CO1, MT-CO2 and MT-CO3, encoded in the mitochondrial DNA, and 11 supernumerary subunits COX4I, COX5A, COX5B, COX6A, COX6B, COX6C, COX7A, COX7B, COX7C, COX8 and NDUFA4, which are encoded in the nuclear genome. The complex exists as a monomer or a dimer and forms supercomplexes (SCs) in the inner mitochondrial membrane with NADH-ubiquinone oxidoreductase (complex I, CI) and ubiquinol-cytochrome c oxidoreductase (cytochrome b-c1 complex, complex III, CIII), resulting in different assemblies (supercomplex SCI(1)III(2)IV(1) and megacomplex MCI(2)III(2)IV(2)). Found in a complex with TMEM177, COA6, COX18, COX20, SCO1 and SCO2. Interacts with TMEM177 in a COX20-dependent manner. Interacts with COX20. Interacts with COX16. Requires Cu cation as cofactor.

It localises to the mitochondrion inner membrane. The catalysed reaction is 4 Fe(II)-[cytochrome c] + O2 + 8 H(+)(in) = 4 Fe(III)-[cytochrome c] + 2 H2O + 4 H(+)(out). Component of the cytochrome c oxidase, the last enzyme in the mitochondrial electron transport chain which drives oxidative phosphorylation. The respiratory chain contains 3 multisubunit complexes succinate dehydrogenase (complex II, CII), ubiquinol-cytochrome c oxidoreductase (cytochrome b-c1 complex, complex III, CIII) and cytochrome c oxidase (complex IV, CIV), that cooperate to transfer electrons derived from NADH and succinate to molecular oxygen, creating an electrochemical gradient over the inner membrane that drives transmembrane transport and the ATP synthase. Cytochrome c oxidase is the component of the respiratory chain that catalyzes the reduction of oxygen to water. Electrons originating from reduced cytochrome c in the intermembrane space (IMS) are transferred via the dinuclear copper A center (CU(A)) of subunit 2 and heme A of subunit 1 to the active site in subunit 1, a binuclear center (BNC) formed by heme A3 and copper B (CU(B)). The BNC reduces molecular oxygen to 2 water molecules using 4 electrons from cytochrome c in the IMS and 4 protons from the mitochondrial matrix. This is Cytochrome c oxidase subunit 2 (MT-CO2) from Apodemus semotus (Taiwan field mouse).